We begin with the raw amino-acid sequence, 387 residues long: 3-dehydroquinate synthase (387 aa).

This sequence belongs to the archaeal-type DHQ synthase family.

The enzyme catalyses 2-amino-2,3,7-trideoxy-D-lyxo-hept-6-ulosonate + NAD(+) + H2O = 3-dehydroquinate + NH4(+) + NADH + H(+). Functionally, catalyzes the oxidative deamination and cyclization of 2-amino-3,7-dideoxy-D-threo-hept-6-ulosonic acid (ADH) to yield 3-dehydroquinate (DHQ), which is fed into the canonical shikimic pathway of aromatic amino acid biosynthesis. In Halobacterium salinarum (strain ATCC 29341 / DSM 671 / R1), this protein is 3-dehydroquinate synthase.